The following is a 280-amino-acid chain: MQKKIETVKTLLDSLPFIRKFYGKTIVIKYGGSAQIDERLKESFAIDILMLYMVGIKPVIVHGGGKRITEILTALNVKTEFKDGVRVTTAESIKIAEMVLSGEINKEIVNMLNQHGAKAIGINGKDMSFMKAKSLVGYTGEITSIDGVFVNKLLSESLIPVIAPIAAGDSATHPGYNINADTAASEIAAAIDAKRVIFLTDTPGVLDKGKNLISSLTKEEIEKLKQDGTIAGGMIPKVDAALRAVERGVEKAHIIDGRIEHSILLELLTSEGIGTEIKES.

Residues 64-65 (GG), arginine 86, and asparagine 177 each bind substrate.

This sequence belongs to the acetylglutamate kinase family. ArgB subfamily.

The protein resides in the cytoplasm. The enzyme catalyses N-acetyl-L-glutamate + ATP = N-acetyl-L-glutamyl 5-phosphate + ADP. The protein operates within amino-acid biosynthesis; L-arginine biosynthesis; N(2)-acetyl-L-ornithine from L-glutamate: step 2/4. Functionally, catalyzes the ATP-dependent phosphorylation of N-acetyl-L-glutamate. This chain is Acetylglutamate kinase, found in Nautilia profundicola (strain ATCC BAA-1463 / DSM 18972 / AmH).